Reading from the N-terminus, the 504-residue chain is Sodium-coupled neutral amino acid transporter 3 (504 aa).

S52 is subject to Phosphoserine; by PKC. Residue N73 is glycosylated (N-linked (GlcNAc...) asparagine). 5 consecutive transmembrane segments (helical) span residues G82–L102, V105–I125, A143–I163, M186–M206, and L212–Y232. C239 and C275 are oxidised to a cystine. N-linked (GlcNAc...) asparagine glycans are attached at residues N247 and N251. A helical membrane pass occupies residues A287–Y307. N323 is a glycosylation site (N-linked (GlcNAc...) asparagine). 5 helical membrane passes run L324–F344, I366–F386, V408–I428, I431–F451, and I469–I489.

It belongs to the amino acid/polyamine transporter 2 family. Phosphorylation at Ser-52 induces internalization and sequestration into an intracellular reservoir. During dephosphorylation by protein phosphatases, can recycle back to the plasma membrane and regain activity. Prolonged phosphorylation results in its degradation. As to expression, highly expressed in liver. Expressed in skeletal muscle. Expressed in kidney, heart and brain. Not detected in gut, lung or spleen. Expressed ubiquitously in hepatocytes in liver whereas in kidney expression is restricted to the medulla. Within brain, expressed in glial cells. In the cerebellum, expressed on Bergmann glial fibers in the molecular layer and astrocytes in the granule layer. Expressed in brain kidney and liver (at protein level). In the adult kidney, highly expressed in the outer strip of the outer medulla and medullary rays penetrating into the kidney cortex (at protein level).

It is found in the cell membrane. The protein localises to the basolateral cell membrane. The catalysed reaction is L-glutamine(out) + Na(+)(out) + H(+)(in) = L-glutamine(in) + Na(+)(in) + H(+)(out). It carries out the reaction L-asparagine(out) + Na(+)(out) + H(+)(in) = L-asparagine(in) + Na(+)(in) + H(+)(out). The enzyme catalyses L-histidine(out) + Na(+)(out) + H(+)(in) = L-histidine(in) + Na(+)(in) + H(+)(out). L-glutamine efflux and L-glutamine uptake are regulated by CO2/HCO3(-) through SLC4A4 leading to modulation of cytosolic pH and Na(+)concentration. Symporter that cotransports specific neutral amino acids and sodium ions, coupled to an H(+) antiporter activity. Mainly participates in the glutamate-GABA-glutamine cycle in brain where it transports L-glutamine from astrocytes in the intercellular space for the replenishment of both neurotransmitters glutamate and gamma-aminobutyric acid (GABA) in neurons. Also functions as the major influx transporter in ganglion cells mediating the uptake of glutamine. The transport activity is specific for L-glutamine, L-histidine and L-asparagine. The transport is electroneutral coupled to the cotransport of 1 Na(+) and the antiport of 1 H(+), pH dependent, saturable, Li(+) tolerant and functions in both direction depending on the concentration gradients of its substrates and cotransported ions. Also mediates an amino acid-gated H(+) conductance that is not stoichiometrically coupled to the amino acid transport but which influences the ionic gradients that drive the amino acid transport. In addition, may play a role in nitrogen metabolism, amino acid homeostasis, glucose metabolism and renal ammoniagenesis. In Rattus norvegicus (Rat), this protein is Sodium-coupled neutral amino acid transporter 3.